The following is a 556-amino-acid chain: MVISAEKQTVILKMAADFNFYGKRLRATKLEVCDDISKMVYDTTKHSTAICDWLEANKPAKPKAAKVAKAIKNDERPEAAGIVSSTVEQWEVKQGKRFIITSIQNNTFPHKNFLASLEQYAQFIGADLLVSKFIYNKNGFQNGEGADGIRYDSAFDKYICNKNVFLNNRRFAFMAEINVLPTADYPLSGFAETATALNLEGLAIGAAKITAESVPALKGEIVRRMYSTGTATLKNYIQQKAGQKAEALHNFGALIVEFDEDGEFFVRQLETMDESGVFYDLNTCATPAGCYETTGHVLGLQYGDIHAEKLDEECAAASWGHGDTYGLVDILKPKYQFVHDVHDFTSRNHHNRASGVFLAKQYAAGRDKVLDDLIDTGRVLESMERDFSQTIIVESNHDLALSRWLDDRNANIKDDPANAELYHRLNAAIYGAIAEKDDTFNVLDYALRKVAGCEFNAIFLTTDQSFKIAGIECGVHGHNGINGSRGNPKQFKKLGKLNTGHTHTASIYGGVYTAGVTGSLDMGYNVGASSWTQTHIITYANGQRTLIDFKNGKFFA.

As to quaternary structure, homooligomer. Interacts with A2 protein; the two proteins form heterooligomers. Part of a complex containing the host RNA polymerase, protein A1 as well as another viral protein of 11 kDa; these interactions are probably involved in the transcription shutoff of pre-early genes.

Functionally, involved in the degradation of host DNA and the shutoff of host genes and phage pre-early genes. Together with A2 protein, involved in the second step transfer (SST) of viral DNA into the host cell, which leads to the complete entry of viral DNA into the host cell. In Escherichia phage T5 (Enterobacteria phage T5), this protein is Protein A1.